The sequence spans 488 residues: GTPase Der (488 aa).

2 EngA-type G domains span residues 3-166 (PVVA…AEAM) and 199-372 (IKLA…DSAT). Residues 9 to 16 (GRPNVGKS), 56 to 60 (DTGGI), 118 to 121 (NKVD), 205 to 212 (GKPNVGKS), 252 to 256 (DTAGV), and 317 to 320 (NKWD) contribute to the GTP site. A KH-like domain is found at 373–457 (RRVSTSMLTR…PIQLRFQEGD (85 aa)). Positions 460-488 (FENKTEKLTMSQERRRKRAQSHIKDRKTK) are disordered. A compositionally biased stretch (basic residues) spans 473–488 (RRRKRAQSHIKDRKTK).

It belongs to the TRAFAC class TrmE-Era-EngA-EngB-Septin-like GTPase superfamily. EngA (Der) GTPase family. As to quaternary structure, associates with the 50S ribosomal subunit.

GTPase that plays an essential role in the late steps of ribosome biogenesis. This is GTPase Der from Shewanella baltica (strain OS223).